A 230-amino-acid polypeptide reads, in one-letter code: Small ribosomal subunit protein uS3 (230 aa).

One can recognise a KH type-2 domain in the interval 39-107; that stretch reads IRKFLTEKLK…PAQINISEVR (69 aa).

Belongs to the universal ribosomal protein uS3 family. As to quaternary structure, part of the 30S ribosomal subunit. Forms a tight complex with proteins S10 and S14.

In terms of biological role, binds the lower part of the 30S subunit head. Binds mRNA in the 70S ribosome, positioning it for translation. In Psychromonas ingrahamii (strain DSM 17664 / CCUG 51855 / 37), this protein is Small ribosomal subunit protein uS3.